The primary structure comprises 233 residues: Cilia- and flagella-associated protein 299 (233 aa).

It is found in the cytoplasm. Its subcellular location is the nucleus. In terms of biological role, may be involved in spermatogenesis. This is Cilia- and flagella-associated protein 299 from Homo sapiens (Human).